Here is a 333-residue protein sequence, read N- to C-terminus: Endo-1,4-beta-xylanase (333 aa).

The first 17 residues, 1–17, serve as a signal peptide directing secretion; the sequence is MYLVAFMLLAILPTGYC. Residues 18–330 form the GH10 domain; it reads QLNTLAVRAG…KPAYQGIVDG (313 aa). E147 functions as the Proton donor in the catalytic mechanism. E252 acts as the Nucleophile in catalysis.

Belongs to the glycosyl hydrolase 10 (cellulase F) family.

It is found in the secreted. It carries out the reaction Endohydrolysis of (1-&gt;4)-beta-D-xylosidic linkages in xylans.. Its pathway is glycan degradation; xylan degradation. Functionally, has xylanase activity. Seems to be involved in the release of sugars from the hemicellulolytic fraction in the compost. The protein is Endo-1,4-beta-xylanase (xlnA) of Agaricus bisporus (White button mushroom).